Reading from the N-terminus, the 64-residue chain is Large ribosomal subunit protein bL32 (64 aa).

Residues 1–36 form a disordered region; that stretch reads MAVQKSRVTPSRRGQRRSHDALSAKQLSTDPTTGEV.

The protein belongs to the bacterial ribosomal protein bL32 family.

The protein is Large ribosomal subunit protein bL32 of Stenotrophomonas maltophilia (strain K279a).